Consider the following 154-residue polypeptide: 6,7-dimethyl-8-ribityllumazine synthase (154 aa).

Residues 22-23 (FN), 56-58 (AFE), and 80-82 (TVI) contribute to the 5-amino-6-(D-ribitylamino)uracil site. 85-86 (AT) lines the (2S)-2-hydroxy-3-oxobutyl phosphate pocket. His88 (proton donor) is an active-site residue. Residue Phe113 coordinates 5-amino-6-(D-ribitylamino)uracil. Arg127 is a (2S)-2-hydroxy-3-oxobutyl phosphate binding site.

Belongs to the DMRL synthase family. In terms of assembly, forms an icosahedral capsid composed of 60 subunits, arranged as a dodecamer of pentamers. Can interact with riboflavin synthase, forming a lumazine synthase/riboflavin synthase complex, also designated as 'heavy riboflavin synthase complex', which consists of a trimer of riboflavin synthase enclosed within the icosahedral structure composed of 60 subunits of 6,7-dimethyl-8-ribityllumazine synthase.

The enzyme catalyses (2S)-2-hydroxy-3-oxobutyl phosphate + 5-amino-6-(D-ribitylamino)uracil = 6,7-dimethyl-8-(1-D-ribityl)lumazine + phosphate + 2 H2O + H(+). The protein operates within cofactor biosynthesis; riboflavin biosynthesis; riboflavin from 2-hydroxy-3-oxobutyl phosphate and 5-amino-6-(D-ribitylamino)uracil: step 1/2. Catalyzes the formation of 6,7-dimethyl-8-ribityllumazine by condensation of 5-amino-6-(D-ribitylamino)uracil with 3,4-dihydroxy-2-butanone 4-phosphate. This is the penultimate step in the biosynthesis of riboflavin. Is able to use the non-natural R enantiomer of 3,4-dihydroxy-2-butanone 4-phosphate as a substrate, but with less efficiency than the natural S enantiomer. Cannot use unphosphorylated 3,4-dihydroxy-2-butanone, 3,4-dihydroxy-2-butanone 3-phosphate or diacetyl as substrates. The sequence is that of 6,7-dimethyl-8-ribityllumazine synthase (ribH) from Bacillus subtilis (strain 168).